Here is a 458-residue protein sequence, read N- to C-terminus: 3-isopropylmalate dehydratase large subunit (458 aa).

[4Fe-4S] cluster is bound by residues Cys-337, Cys-397, and Cys-400.

Belongs to the aconitase/IPM isomerase family. LeuC type 1 subfamily. Heterodimer of LeuC and LeuD. The cofactor is [4Fe-4S] cluster.

It catalyses the reaction (2R,3S)-3-isopropylmalate = (2S)-2-isopropylmalate. The protein operates within amino-acid biosynthesis; L-leucine biosynthesis; L-leucine from 3-methyl-2-oxobutanoate: step 2/4. Catalyzes the isomerization between 2-isopropylmalate and 3-isopropylmalate, via the formation of 2-isopropylmaleate. The sequence is that of 3-isopropylmalate dehydratase large subunit from Leuconostoc mesenteroides subsp. mesenteroides (strain ATCC 8293 / DSM 20343 / BCRC 11652 / CCM 1803 / JCM 6124 / NCDO 523 / NBRC 100496 / NCIMB 8023 / NCTC 12954 / NRRL B-1118 / 37Y).